Reading from the N-terminus, the 39-residue chain is MAGTGRVPLWLVATVGGIAVITVLGIFIYGSYSGIGSSL.

A helical transmembrane segment spans residues 9-29 (LWLVATVGGIAVITVLGIFIY).

The protein belongs to the PsbJ family. In terms of assembly, PSII is composed of 1 copy each of membrane proteins PsbA, PsbB, PsbC, PsbD, PsbE, PsbF, PsbH, PsbI, PsbJ, PsbK, PsbL, PsbM, PsbT, PsbX, PsbY, PsbZ, Psb30/Ycf12, at least 3 peripheral proteins of the oxygen-evolving complex and a large number of cofactors. It forms dimeric complexes.

The protein localises to the plastid. It is found in the chloroplast thylakoid membrane. Functionally, one of the components of the core complex of photosystem II (PSII). PSII is a light-driven water:plastoquinone oxidoreductase that uses light energy to abstract electrons from H(2)O, generating O(2) and a proton gradient subsequently used for ATP formation. It consists of a core antenna complex that captures photons, and an electron transfer chain that converts photonic excitation into a charge separation. The protein is Photosystem II reaction center protein J of Gracilaria tenuistipitata var. liui (Red alga).